The sequence spans 184 residues: dCTP deaminase (184 aa).

DCTP is bound at residue 107-112; that stretch reads KSTYAR. The Proton donor/acceptor role is filled by Glu133. DCTP contacts are provided by Gln152, Tyr166, and Gln176.

This sequence belongs to the dCTP deaminase family. In terms of assembly, homotrimer.

The catalysed reaction is dCTP + H2O + H(+) = dUTP + NH4(+). It participates in pyrimidine metabolism; dUMP biosynthesis; dUMP from dCTP (dUTP route): step 1/2. Its function is as follows. Catalyzes the deamination of dCTP to dUTP. This Acidiphilium cryptum (strain JF-5) protein is dCTP deaminase.